The sequence spans 248 residues: Pulmonary surfactant-associated protein A (248 aa).

The first 20 residues, M1–C20, serve as a signal peptide directing secretion. Residues G31–P100 form the Collagen-like domain. Positions P33–P100 are disordered. Residues P42–K51 are compositionally biased toward basic and acidic residues. The span at P54–D65 shows a compositional bias: pro residues. Residues I134–E247 form the C-type lectin domain. 2 disulfide bridges follow: C155/C246 and C224/C238. N207 is a glycosylation site (N-linked (GlcNAc...) asparagine). Ca(2+)-binding residues include E215, A217, N234, and D235.

Belongs to the SFTPA family. As to quaternary structure, oligomeric complex of 6 set of homotrimers.

Its subcellular location is the secreted. It localises to the extracellular space. The protein resides in the extracellular matrix. The protein localises to the surface film. Its function is as follows. In presence of calcium ions, it binds to surfactant phospholipids and contributes to lower the surface tension at the air-liquid interface in the alveoli of the mammalian lung and is essential for normal respiration. Enhances the expression of MYO18A/SP-R210 on alveolar macrophages. This chain is Pulmonary surfactant-associated protein A (SFTPA1), found in Macaca mulatta (Rhesus macaque).